The primary structure comprises 358 residues: Membrane-bound lytic murein transglycosylase C (358 aa).

Residues 1–19 (MKITLKKLLILAIVPFLYA) form the signal peptide. Cys-20 carries the N-palmitoyl cysteine lipid modification. The S-diacylglycerol cysteine moiety is linked to residue Cys-20.

Belongs to the transglycosylase Slt family.

Its subcellular location is the cell outer membrane. The catalysed reaction is Exolytic cleavage of the (1-&gt;4)-beta-glycosidic linkage between N-acetylmuramic acid (MurNAc) and N-acetylglucosamine (GlcNAc) residues in peptidoglycan, from either the reducing or the non-reducing ends of the peptidoglycan chains, with concomitant formation of a 1,6-anhydrobond in the MurNAc residue.. In terms of biological role, murein-degrading enzyme. May play a role in recycling of muropeptides during cell elongation and/or cell division. This Actinobacillus succinogenes (strain ATCC 55618 / DSM 22257 / CCUG 43843 / 130Z) protein is Membrane-bound lytic murein transglycosylase C.